Reading from the N-terminus, the 222-residue chain is Glutathione S-transferase 3 (222 aa).

The 82-residue stretch at 2 to 83 (APLKLYGMPL…YIASKYASEG (82 aa)) folds into the GST N-terminal domain. Residues serine 12, 13–14 (PN), 41–42 (HK), 54–55 (QI), and 67–68 (ES) each bind glutathione. The GST C-terminal domain maps to 89 to 219 (ATASAAKLEV…AAIPLPPPPS (131 aa)).

The protein belongs to the GST superfamily. Phi family. As to quaternary structure, homodimer.

The catalysed reaction is RX + glutathione = an S-substituted glutathione + a halide anion + H(+). Its function is as follows. Conjugation of reduced glutathione to a wide number of exogenous and endogenous hydrophobic electrophiles. Involved in the detoxification of certain herbicides. The protein is Glutathione S-transferase 3 of Zea mays (Maize).